Reading from the N-terminus, the 167-residue chain is RNA pyrophosphohydrolase (167 aa).

The Nudix hydrolase domain occupies 7–160 (PYRPCVGVMV…KRRAYEEVVA (154 aa)). Positions 48-69 (GGIDEGEDPLEAACRELYEETG) match the Nudix box motif.

This sequence belongs to the Nudix hydrolase family. RppH subfamily. A divalent metal cation is required as a cofactor.

Its function is as follows. Accelerates the degradation of transcripts by removing pyrophosphate from the 5'-end of triphosphorylated RNA, leading to a more labile monophosphorylated state that can stimulate subsequent ribonuclease cleavage. The chain is RNA pyrophosphohydrolase from Rhizobium meliloti (strain 1021) (Ensifer meliloti).